Consider the following 407-residue polypeptide: Cytochrome P450-pinF2, plant-inducible (407 aa).

Cys356 is a binding site for heme.

The protein belongs to the cytochrome P450 family. Heme is required as a cofactor.

Not essential for virulence, but may be involved in the detoxification of plant protective agents at the site of wounding. The polypeptide is Cytochrome P450-pinF2, plant-inducible (cyp104) (Rhizobium radiobacter (Agrobacterium tumefaciens)).